The chain runs to 259 residues: 14-3-3-like protein (259 aa).

A disordered region spans residues 238–259; that stretch reads MQDPAAGDDREGADMKVEDAEP. The span at 244-259 shows a compositional bias: basic and acidic residues; it reads GDDREGADMKVEDAEP.

It belongs to the 14-3-3 family.

This Chlamydomonas reinhardtii (Chlamydomonas smithii) protein is 14-3-3-like protein.